The primary structure comprises 112 residues: Large ribosomal subunit protein bL17 (112 aa).

Belongs to the bacterial ribosomal protein bL17 family. Part of the 50S ribosomal subunit. Contacts protein L32.

The protein is Large ribosomal subunit protein bL17 of Thermoanaerobacter pseudethanolicus (strain ATCC 33223 / 39E) (Clostridium thermohydrosulfuricum).